A 1102-amino-acid chain; its full sequence is Centrosomal protein of 128 kDa (1102 aa).

3 positions are modified to phosphoserine: Ser31, Ser248, and Ser290. Coiled-coil stretches lie at residues 215-822 (VSDR…LETE) and 878-959 (EELK…ALQM). The disordered stretch occupies residues 326-346 (QHQVPCISKQPLSHQDDQGDD). Disordered regions lie at residues 991–1048 (SEKT…DHSR) and 1070–1102 (DPAS…KYKK). A compositionally biased stretch (basic and acidic residues) spans 1009-1027 (QQRRDDTKPRIKSFRDDRP). Composition is skewed to polar residues over residues 1039 to 1048 (HSSSCQDHSR) and 1076 to 1089 (GDTT…TSPQ). Residues 1090–1102 (SKKEEHEIKKYKK) are compositionally biased toward basic and acidic residues.

Its subcellular location is the cytoplasm. It localises to the cytoskeleton. The protein localises to the microtubule organizing center. It is found in the centrosome. The protein resides in the centriole. Its subcellular location is the spindle pole. In Mus musculus (Mouse), this protein is Centrosomal protein of 128 kDa (Cep128).